Here is a 222-residue protein sequence, read N- to C-terminus: MKQTSAVVASKVIAADKAAALALTPVSRETEQRLDRYVALLLEWQAKTNLVAPSTLPHLWTRHISDSLQLLDLAPDAKIWVDLGSGGGFPGVVLACALAERPGAEVHLVERIAKKAAFLREAIRVTGAPGIVHLSEIGDIVEKWSGGVDCVTARALAPLHQLIGFAEPLVKRGAKALFLKGQDVEAELTESTKYWKIEPKLYSSRTGGQGWIVAIDCIERHN.

S-adenosyl-L-methionine contacts are provided by residues Gly-84, Phe-89, 141–142 (VE), and Arg-154.

The protein belongs to the methyltransferase superfamily. RNA methyltransferase RsmG family.

The protein resides in the cytoplasm. It catalyses the reaction guanosine(527) in 16S rRNA + S-adenosyl-L-methionine = N(7)-methylguanosine(527) in 16S rRNA + S-adenosyl-L-homocysteine. Its function is as follows. Specifically methylates the N7 position of guanine in position 527 of 16S rRNA. This chain is Ribosomal RNA small subunit methyltransferase G, found in Bradyrhizobium sp. (strain BTAi1 / ATCC BAA-1182).